The sequence spans 374 residues: Alanine racemase (374 aa).

Residue K35 is the Proton acceptor; specific for D-alanine of the active site. K35 is modified (N6-(pyridoxal phosphate)lysine). R130 serves as a coordination point for substrate. The active-site Proton acceptor; specific for L-alanine is Y253. M305 is a substrate binding site.

The protein belongs to the alanine racemase family. It depends on pyridoxal 5'-phosphate as a cofactor.

The catalysed reaction is L-alanine = D-alanine. It functions in the pathway amino-acid biosynthesis; D-alanine biosynthesis; D-alanine from L-alanine: step 1/1. In terms of biological role, catalyzes the interconversion of L-alanine and D-alanine. May also act on other amino acids. This Ralstonia pickettii (strain 12J) protein is Alanine racemase (alr).